A 144-amino-acid chain; its full sequence is MVVRKEKKSRKYRGYRTHGWGTKGQHRDRGAQGGRQIGMHKEKWSWTVKFGEGWYGKHGFRNPTSKLVNAIGLRKLQEYIDNDKIKIEEENGKKVVDLAKYGYDKLLGGGNLRLPLVIKVAKATEKAKERVKEIGGEIILTSSE.

The span at 1–16 (MVVRKEKKSRKYRGYR) shows a compositional bias: basic residues. The segment at 1-35 (MVVRKEKKSRKYRGYRTHGWGTKGQHRDRGAQGGR) is disordered.

Belongs to the universal ribosomal protein uL15 family. As to quaternary structure, part of the 50S ribosomal subunit.

Its function is as follows. Binds to the 23S rRNA. This is Large ribosomal subunit protein uL15 from Sulfolobus acidocaldarius (strain ATCC 33909 / DSM 639 / JCM 8929 / NBRC 15157 / NCIMB 11770).